The following is a 103-amino-acid chain: Thrombin inhibitor rhodniin (103 aa).

Kazal-like domains are found at residues 1 to 50 and 51 to 103; these read EGGE…PCEP and DEDE…PCRT. 6 disulfide bridges follow: Cys-6–Cys-31, Cys-8–Cys-27, Cys-16–Cys-48, Cys-57–Cys-84, Cys-60–Cys-80, and Cys-69–Cys-101.

It localises to the secreted. Its function is as follows. Thrombin-specific inhibitor. Appears to form 1:1 complexes with thrombin. Prevents blood clotting to allow the insect to feed on blood. The chain is Thrombin inhibitor rhodniin from Rhodnius prolixus (Triatomid bug).